A 158-amino-acid chain; its full sequence is Superoxide dismutase [Cu-Zn] (158 aa).

Cu cation-binding residues include H46, H48, and H63. An intrachain disulfide couples C57 to C149. Residues H63, H71, H80, and D83 each coordinate Zn(2+). H120 serves as a coordination point for Cu cation.

It belongs to the Cu-Zn superoxide dismutase family. As to quaternary structure, homodimer. The cofactor is Cu cation. It depends on Zn(2+) as a cofactor.

It is found in the cytoplasm. It carries out the reaction 2 superoxide + 2 H(+) = H2O2 + O2. Destroys radicals which are normally produced within the cells and which are toxic to biological systems. The protein is Superoxide dismutase [Cu-Zn] (SODC) of Brugia pahangi (Filarial nematode worm).